A 162-amino-acid polypeptide reads, in one-letter code: Caveolin-2 (162 aa).

The Cytoplasmic portion of the chain corresponds to 1-86 (MGLETEKADV…FEISKYVMYK (86 aa)). Tyr-19 carries the post-translational modification Phosphotyrosine; by SRC. Phosphoserine occurs at positions 20 and 23. Tyr-27 is subject to Phosphotyrosine. Position 36 is a phosphoserine (Ser-36). The segment at residues 87 to 107 (FLTVFLAIPLAFIAGILFATL) is an intramembrane region (helical). Residues 108 to 162 (SCLHIWILMPFVKTCLMVLPSVQTIWKSVTDVVIGPLCTSVGRSFSSVSMQLSHD) are Cytoplasmic-facing.

It belongs to the caveolin family. Monomer or homodimer. Interacts with CAV1; the interaction forms a stable heterooligomeric complex that is required for targeting to lipid rafts and for caveolae formation. Tyrosine phosphorylated forms do not form heterooligomers with the Tyr-19-phosphorylated form existing as a monomer or dimer, and the Tyr-27-form as a monomer only. Interacts (tyrosine phosphorylated form) with the SH2 domain-containing proteins, RASA1, NCK1 and SRC. Interacts (tyrosine phosphorylated form) with INSR, the interaction (Tyr-27-phosphorylated form) is increased on insulin stimulation. Interacts (Tyr-19 phosphorylated form) with MAPK1 (phosphorylated form); the interaction, promoted by insulin, leads to nuclear location and MAPK1 activation. Interacts with STAT3; the interaction is increased on insulin-induced tyrosine phosphorylation leading to STAT activation. Phosphorylated on serine and tyrosine residues. CAV1 promotes phosphorylation on Ser-23 which then targets the complex to the plasma membrane, lipid rafts and caveolae. Phosphorylation on Ser-36 appears to modulate mitosis in endothelial cells. Phosphorylation on both Tyr-19 and Tyr-27 is required for insulin-induced 'Ser-727' phosphorylation of STAT3 and its activation. Phosphorylation on Tyr-19 is required for insulin-induced phosphorylation of MAPK1 and DNA binding of STAT3. Tyrosine phosphorylation is induced by both EGF and insulin.

Its subcellular location is the nucleus. The protein resides in the cytoplasm. It localises to the golgi apparatus membrane. It is found in the cell membrane. The protein localises to the membrane. Its subcellular location is the caveola. In terms of biological role, may act as a scaffolding protein within caveolar membranes. Interacts directly with G-protein alpha subunits and can functionally regulate their activity. Acts as an accessory protein in conjunction with CAV1 in targeting to lipid rafts and driving caveolae formation. The Ser-36 phosphorylated form has a role in modulating mitosis in endothelial cells. Positive regulator of cellular mitogenesis of the MAPK signaling pathway. Required for the insulin-stimulated nuclear translocation and activation of MAPK1 and STAT3, and the subsequent regulation of cell cycle progression. The sequence is that of Caveolin-2 (Cav2) from Mus musculus (Mouse).